The sequence spans 485 residues: Pre-glycoprotein polyprotein GP complex (485 aa).

Glycine 2 carries the N-myristoyl glycine; by host lipid modification. The Extracellular segment spans residues 2 to 17; sequence GQLISFFGEIPTILQE. A helical transmembrane segment spans residues 18-33; sequence ALNIALIAVSIIATIK. Residues 34 to 58 lie on the Cytoplasmic side of the membrane; that stretch reads GVVNVWKSGLIQLLMFVMLAGRSCS. Cysteine 57 is a binding site for Zn(2+). Residues 59–424 lie on the Extracellular side of the membrane; sequence VQIGHHLELE…QGRTPLSLVD (366 aa). Cystine bridges form between cysteine 85/cysteine 225, cysteine 271/cysteine 284, cysteine 293/cysteine 302, and cysteine 356/cysteine 377. N-linked (GlcNAc...) asparagine; by host glycans are attached at residues asparagine 88, asparagine 128, asparagine 179, and asparagine 218. Asparagine 357, asparagine 365, asparagine 382, and asparagine 387 each carry an N-linked (GlcNAc...) asparagine; by host glycan. A helical membrane pass occupies residues 425 to 445; sequence VCFWSTLFYTASIFLHLIRIP. The Cytoplasmic segment spans residues 446–485; it reads THRHIVGEGCPKPHRLRADSTCACGLYKQKRRPLKWVRSN. Zn(2+) is bound by residues histidine 447, histidine 449, cysteine 455, histidine 459, cysteine 467, and cysteine 469.

This sequence belongs to the arenaviridae GPC protein family. In terms of assembly, interacts with glycoprotein G2. Part of the GP complex (GP-C) together with glycoprotein G1 and glycoprotein G2. The GP-complex interacts with protein Z, which interacts with ribonucleocapsid; these interactions may induce virion budding. Homotrimer; disulfide-linked. In pre-fusion state, G1 homotrimers bind G2 homotrimers via ionic interactions. Part of the GP complex (GP-C) together with glycoprotein G2 and the stable signal peptide. The GP-complex interacts with protein Z, which interacts with ribonucleocapsid; these interactions may induce virion budding. As to quaternary structure, homotrimer. Interacts with the stable signal peptide. In pre-fusion state, G2 homotrimers bind G1 homotrimers via ionic interactions. Part of the GP complex (GP-C) together with glycoprotein G1 and the stable signal peptide. Acidification in the endosome triggers rearrangements, which ultimately leads to a 6 helix bundle formed by the two heptad repeat domains (HR1 and HR2) in post-fusion state. The GP-complex interacts with protein Z, which interacts with ribonucleocapsid; these interactions may induce virion budding. Specific enzymatic cleavages in vivo yield mature proteins. GP-C polyprotein is cleaved in the endoplasmic reticulum by the host protease MBTPS1. Only cleaved glycoprotein is incorporated into virions. Post-translationally, the SSP remains stably associated with the GP complex following cleavage by signal peptidase and plays crucial roles in the trafficking of GP through the secretory pathway. In terms of processing, myristoylation is necessary for GP2-mediated fusion activity.

It localises to the virion membrane. Its subcellular location is the host endoplasmic reticulum membrane. The protein localises to the host Golgi apparatus membrane. The protein resides in the host cell membrane. Its function is as follows. Functions as a cleaved signal peptide that is retained as the third component of the GP complex (GP-C). Helps to stabilize the spike complex in its native conformation. The SSP is required for efficient glycoprotein expression, post-translational maturation cleavage of G1 and G2, glycoprotein transport to the cell surface plasma membrane, formation of infectious virus particles, and acid pH-dependent glycoprotein-mediated cell fusion. Forms the virion spikes together with glycoprotein G2. The glycoprotein spike trimers are connected to the underlying matrix. Interacts with the host receptor leading to virus endocytosis. Functionally, forms the virion spikes together with glycoprotein G1. The glycoprotein spike trimers are connected to the underlying matrix. Class I viral fusion protein that directs fusion of viral and host endosomal membranes, leading to delivery of the nucleocapsid into the cytoplasm. Membrane fusion is mediated by irreversible conformational changes induced by acidification. The polypeptide is Pre-glycoprotein polyprotein GP complex (Sigmodon hispidus (Hispid cotton rat)).